The chain runs to 215 residues: Fibroblast growth factor 10 (215 aa).

Residues 1–36 form the signal peptide; the sequence is MWKWILTHCASAFPHLPGCCCCFLLLFLVSSVPVTC. The disordered stretch occupies residues 49–73; sequence TNSSSSSSSSSSSSSFSSPSSAGRH. A glycan (N-linked (GlcNAc...) asparagine) is linked at asparagine 50. Residues 51–69 show a composition bias toward low complexity; sequence SSSSSSSSSSSSSFSSPSS. Asparagine 203 carries an N-linked (GlcNAc...) asparagine glycan.

The protein belongs to the heparin-binding growth factors family. As to quaternary structure, interacts with FGFR1 and FGFR2. Interacts with FGFBP1. Preferentially expressed in the lung in adults.

Its subcellular location is the secreted. Functionally, plays an important role in the regulation of embryonic development, cell proliferation and cell differentiation. Required for normal branching morphogenesis. May play a role in wound healing. In Rattus norvegicus (Rat), this protein is Fibroblast growth factor 10 (Fgf10).